Consider the following 642-residue polypeptide: Polyglycine hydrolase (642 aa).

The N-terminal stretch at 1–23 is a signal peptide; that stretch reads MYTSRLLLSNLASCLSLATLVAS. N37, N100, N159, and N341 each carry an N-linked (GlcNAc...) asparagine glycan. C149 and C183 are oxidised to a cystine. The active site involves S370. N390, N407, N444, N487, and N494 each carry an N-linked (GlcNAc...) asparagine glycan.

It belongs to the peptidase S12 family.

It localises to the secreted. It catalyses the reaction a glycyl-glycyl-[protein] + H2O = N-terminal glycyl-[protein] + [protein]-C-terminal glycine. Its activity is regulated as follows. Not inhibited by phenylmethylsulfonyl fluoride (PMSF; serine peptidase class S1 inhibitor), clavulanic acid (beta-lactamase inhibitor) or ampicillin (penicillin-binding protein (PBP) inhibitor). Its function is as follows. Serine-type endopeptidase that cleaves Gly-Gly bonds in the polyglycine linker of host plant class IV chitinases to disrupt their chitin-binding, and thereby plays a role in lowering the defense responses of the host to the fungus. Degrades Z.mays Endochitinase A (CHIA). Degrades Z.mays Endochitinase B (CHIB). Has no activity on Z.mays CHIA following CHIA cleavage by fungalysin. The chain is Polyglycine hydrolase from Epicoccum sorghinum (Endophyte fungus).